The chain runs to 320 residues: Methionyl-tRNA formyltransferase (320 aa).

Residue 112–115 (SILP) participates in (6S)-5,6,7,8-tetrahydrofolate binding.

This sequence belongs to the Fmt family.

It carries out the reaction L-methionyl-tRNA(fMet) + (6R)-10-formyltetrahydrofolate = N-formyl-L-methionyl-tRNA(fMet) + (6S)-5,6,7,8-tetrahydrofolate + H(+). In terms of biological role, attaches a formyl group to the free amino group of methionyl-tRNA(fMet). The formyl group appears to play a dual role in the initiator identity of N-formylmethionyl-tRNA by promoting its recognition by IF2 and preventing the misappropriation of this tRNA by the elongation apparatus. This Shewanella woodyi (strain ATCC 51908 / MS32) protein is Methionyl-tRNA formyltransferase.